The chain runs to 333 residues: MTSDSAETTPLRDSSETARWQDYFQLMKPRVMSLVVFTGLTGLLAARAPIHPVLAAIAVLCIAVGAGASGALNMWYDADIDQKMRRTRGRPVPAGKIKGEEAASLGVVLSLLSVMFLGFAVNWLAAGLLAFTIVFYAVVYTMWLKRWTAQNIVIGGLAGALPPAIGWAAATGSAPLNAWLMVAIIFFWTPPHFWALSLYVTTDYAKAGVPMLPVVKGARETRKQILLYSLILFPICLSPVLTGLGGPIYLAVSGLGGLVFLLLAWRVFASKAGDAADPRVADRALYDVTEDEKAAGAKAARNLFAFSILYLFALFAALLGEAVTGVRPLELLK.

The next 8 helical transmembrane spans lie at Val-31–His-51, Pro-52–Leu-72, Met-115–Phe-135, Ile-152–Gly-172, Ala-178–Leu-198, Lys-223–Gly-243, Leu-244–Ala-264, and Leu-303–Val-323.

This sequence belongs to the UbiA prenyltransferase family. Protoheme IX farnesyltransferase subfamily.

The protein resides in the cell inner membrane. It carries out the reaction heme b + (2E,6E)-farnesyl diphosphate + H2O = Fe(II)-heme o + diphosphate. Its pathway is porphyrin-containing compound metabolism; heme O biosynthesis; heme O from protoheme: step 1/1. Its function is as follows. Converts heme B (protoheme IX) to heme O by substitution of the vinyl group on carbon 2 of heme B porphyrin ring with a hydroxyethyl farnesyl side group. In Caulobacter vibrioides (strain ATCC 19089 / CIP 103742 / CB 15) (Caulobacter crescentus), this protein is Protoheme IX farnesyltransferase.